A 58-amino-acid polypeptide reads, in one-letter code: uncharacterized protein (58 aa).

2 4Fe-4S ferredoxin-type domains span residues 2 to 27 (GIKI…IKTY) and 28 to 57 (GVAI…VDTS). Cysteine 9, cysteine 12, cysteine 15, cysteine 19, cysteine 37, cysteine 40, cysteine 43, and cysteine 47 together coordinate [4Fe-4S] cluster.

Requires [4Fe-4S] cluster as cofactor.

Functionally, ferredoxins are iron-sulfur proteins that transfer electrons probably in the CO-dehydrogenase complex. This is an uncharacterized protein from Methanocaldococcus jannaschii (strain ATCC 43067 / DSM 2661 / JAL-1 / JCM 10045 / NBRC 100440) (Methanococcus jannaschii).